The sequence spans 386 residues: O-methyltransferase 11 (386 aa).

Positions 207, 231, 254, 274, and 288 each coordinate S-adenosyl-L-homocysteine. Aspartate 254 contacts S-adenosyl-L-methionine. Histidine 292 serves as the catalytic Proton acceptor.

Belongs to the class I-like SAM-binding methyltransferase superfamily. Cation-independent O-methyltransferase family. As to quaternary structure, homodimer.

It carries out the reaction dopamine + S-adenosyl-L-methionine = 4-methoxytyramine + S-adenosyl-L-homocysteine + H(+). It catalyses the reaction 3,4-dihydroxy-5-methoxyphenethylamine + S-adenosyl-L-methionine = 3-hydroxy-4,5-dimethoxyphenethylamine + S-adenosyl-L-homocysteine + H(+). The enzyme catalyses 3-hydroxy-4,5-dimethoxyphenethylamine + S-adenosyl-L-methionine = mescaline + S-adenosyl-L-homocysteine + H(+). The catalysed reaction is 4-hydroxy-3,5-dimethoxyphenethylamine + S-adenosyl-L-methionine = mescaline + S-adenosyl-L-homocysteine + H(+). It functions in the pathway aromatic compound metabolism. It participates in alkaloid biosynthesis. In terms of biological role, O-methyltransferase participating in the biosynthesis of natural products derived from phenylethylamine, including mescaline, a natural hallucinogen potentially used in psychotherapeutic treatments. Catalyzes the O-methylation of mescaline para hydroxyl groups, using dopamine, 3,4-dihydroxy-5-methoxyphenethylamine, 3-hydroxy-4,5-dimethoxyphenethylamine and 4-hydroxy-3,5-dimethoxyphenethylamine as substrates. This Lophophora williamsii (Peyote) protein is O-methyltransferase 11.